A 316-amino-acid polypeptide reads, in one-letter code: Universal stress protein E (316 aa).

Belongs to the universal stress protein A family.

It is found in the cytoplasm. In terms of biological role, required for resistance to DNA-damaging agents. This is Universal stress protein E (uspE) from Escherichia coli O157:H7.